A 318-amino-acid polypeptide reads, in one-letter code: Beta-ketoacyl-[acyl-carrier-protein] synthase III (318 aa).

Residues Cys112 and His245 contribute to the active site. Positions Gln246–Arg250 are ACP-binding. Residue Asn275 is part of the active site.

Belongs to the thiolase-like superfamily. FabH family. Homodimer.

It is found in the cytoplasm. The catalysed reaction is malonyl-[ACP] + acetyl-CoA + H(+) = 3-oxobutanoyl-[ACP] + CO2 + CoA. It functions in the pathway lipid metabolism; fatty acid biosynthesis. Its function is as follows. Catalyzes the condensation reaction of fatty acid synthesis by the addition to an acyl acceptor of two carbons from malonyl-ACP. Catalyzes the first condensation reaction which initiates fatty acid synthesis and may therefore play a role in governing the total rate of fatty acid production. Possesses both acetoacetyl-ACP synthase and acetyl transacylase activities. Its substrate specificity determines the biosynthesis of branched-chain and/or straight-chain of fatty acids. The chain is Beta-ketoacyl-[acyl-carrier-protein] synthase III from Rickettsia conorii (strain ATCC VR-613 / Malish 7).